A 213-amino-acid chain; its full sequence is uncharacterized protein (213 aa).

3 residues coordinate S-adenosyl-L-methionine: Gly53, Glu74, and Asp96.

The protein belongs to the methyltransferase superfamily. YrrT family.

Could be a S-adenosyl-L-methionine-dependent methyltransferase. This is an uncharacterized protein from Oceanobacillus iheyensis (strain DSM 14371 / CIP 107618 / JCM 11309 / KCTC 3954 / HTE831).